The sequence spans 656 residues: DNA ligase (656 aa).

NAD(+) contacts are provided by residues 32-36 (DEEYD), 81-82 (SM), and Glu-112. Lys-114 functions as the N6-AMP-lysine intermediate in the catalytic mechanism. The NAD(+) site is built by Arg-135, Glu-169, Lys-284, and Lys-308. Positions 402, 405, 418, and 423 each coordinate Zn(2+). The region spanning 577–656 (VQKTPFTGKT…DMWKMLKEGK (80 aa)) is the BRCT domain.

The protein belongs to the NAD-dependent DNA ligase family. LigA subfamily. The cofactor is Mg(2+). It depends on Mn(2+) as a cofactor.

The catalysed reaction is NAD(+) + (deoxyribonucleotide)n-3'-hydroxyl + 5'-phospho-(deoxyribonucleotide)m = (deoxyribonucleotide)n+m + AMP + beta-nicotinamide D-nucleotide.. DNA ligase that catalyzes the formation of phosphodiester linkages between 5'-phosphoryl and 3'-hydroxyl groups in double-stranded DNA using NAD as a coenzyme and as the energy source for the reaction. It is essential for DNA replication and repair of damaged DNA. The protein is DNA ligase of Nautilia profundicola (strain ATCC BAA-1463 / DSM 18972 / AmH).